The following is a 337-amino-acid chain: GTP 3',8-cyclase (337 aa).

The 227-residue stretch at 17–243 (PFQRQYYYLR…HKSHTDGPAK (227 aa)) folds into the Radical SAM core domain. Arg26 is a binding site for GTP. Cys33 and Cys37 together coordinate [4Fe-4S] cluster. Residue Tyr39 participates in S-adenosyl-L-methionine binding. Residue Cys40 coordinates [4Fe-4S] cluster. Arg76 contributes to the GTP binding site. Residue Gly80 participates in S-adenosyl-L-methionine binding. GTP is bound at residue Thr107. Residue Ser131 coordinates S-adenosyl-L-methionine. Lys168 lines the GTP pocket. Met202 contacts S-adenosyl-L-methionine. [4Fe-4S] cluster-binding residues include Cys265 and Cys268. Position 270–272 (270–272 (RLR)) interacts with GTP. Cys282 provides a ligand contact to [4Fe-4S] cluster.

Belongs to the radical SAM superfamily. MoaA family. In terms of assembly, monomer and homodimer. [4Fe-4S] cluster is required as a cofactor.

It carries out the reaction GTP + AH2 + S-adenosyl-L-methionine = (8S)-3',8-cyclo-7,8-dihydroguanosine 5'-triphosphate + 5'-deoxyadenosine + L-methionine + A + H(+). It functions in the pathway cofactor biosynthesis; molybdopterin biosynthesis. Its function is as follows. Catalyzes the cyclization of GTP to (8S)-3',8-cyclo-7,8-dihydroguanosine 5'-triphosphate. This chain is GTP 3',8-cyclase, found in Haemophilus influenzae (strain PittEE).